The chain runs to 182 residues: Lipoprotein signal peptidase (182 aa).

The next 3 helical transmembrane spans lie at 12 to 32, 68 to 88, and 91 to 111; these read VAVF…TKAW, ATWV…VAGV, and ISMK…GNLI. Residues Asp-127 and Asp-140 contribute to the active site. A helical membrane pass occupies residues 135–155; it reads VGNVADIYLVVAGVVLVILIL.

Belongs to the peptidase A8 family.

It localises to the cell membrane. It carries out the reaction Release of signal peptides from bacterial membrane prolipoproteins. Hydrolyzes -Xaa-Yaa-Zaa-|-(S,diacylglyceryl)Cys-, in which Xaa is hydrophobic (preferably Leu), and Yaa (Ala or Ser) and Zaa (Gly or Ala) have small, neutral side chains.. It participates in protein modification; lipoprotein biosynthesis (signal peptide cleavage). Functionally, this protein specifically catalyzes the removal of signal peptides from prolipoproteins. This chain is Lipoprotein signal peptidase, found in Bifidobacterium longum subsp. infantis (strain ATCC 15697 / DSM 20088 / JCM 1222 / NCTC 11817 / S12).